The primary structure comprises 281 residues: 3-methyl-2-oxobutanoate hydroxymethyltransferase (281 aa).

Asp-49 and Asp-88 together coordinate Mg(2+). 3-methyl-2-oxobutanoate contacts are provided by residues 49-50, Asp-88, and Lys-118; that span reads DS. Residue Glu-120 coordinates Mg(2+). The active-site Proton acceptor is Glu-186.

Belongs to the PanB family. Homodecamer; pentamer of dimers. It depends on Mg(2+) as a cofactor.

Its subcellular location is the cytoplasm. It catalyses the reaction 3-methyl-2-oxobutanoate + (6R)-5,10-methylene-5,6,7,8-tetrahydrofolate + H2O = 2-dehydropantoate + (6S)-5,6,7,8-tetrahydrofolate. It participates in cofactor biosynthesis; (R)-pantothenate biosynthesis; (R)-pantoate from 3-methyl-2-oxobutanoate: step 1/2. In terms of biological role, catalyzes the reversible reaction in which hydroxymethyl group from 5,10-methylenetetrahydrofolate is transferred onto alpha-ketoisovalerate to form ketopantoate. The polypeptide is 3-methyl-2-oxobutanoate hydroxymethyltransferase (Chelativorans sp. (strain BNC1)).